Reading from the N-terminus, the 212-residue chain is Large ribosomal subunit protein uL3 (212 aa).

Positions arginine 134–proline 155 are disordered. Glutamine 153 carries the N5-methylglutamine modification.

The protein belongs to the universal ribosomal protein uL3 family. In terms of assembly, part of the 50S ribosomal subunit. Forms a cluster with proteins L14 and L19. In terms of processing, methylated by PrmB.

Its function is as follows. One of the primary rRNA binding proteins, it binds directly near the 3'-end of the 23S rRNA, where it nucleates assembly of the 50S subunit. In Pseudoalteromonas atlantica (strain T6c / ATCC BAA-1087), this protein is Large ribosomal subunit protein uL3.